The primary structure comprises 119 residues: MKRIAFVFSTAPHGTAAGREGLDALLATSALTDDLTVFFIADGVFQLLSGQKPDAVLARDYIATFKLLGLYDIEQCWVCAASLRERGLDPQTPFVVEATPLEADALRRELANYDVILRF.

It belongs to the DsrF/TusC family. Heterohexamer, formed by a dimer of trimers. The hexameric TusBCD complex contains 2 copies each of TusB, TusC and TusD. The TusBCD complex interacts with TusE.

The protein localises to the cytoplasm. Part of a sulfur-relay system required for 2-thiolation of 5-methylaminomethyl-2-thiouridine (mnm(5)s(2)U) at tRNA wobble positions. The chain is Protein TusC from Escherichia coli O8 (strain IAI1).